Consider the following 126-residue polypeptide: MSTIRSFEDLKAKRQEILDRKAARNGKTIINVSLATCSIAAGGKVAMEAMQDEVAKNGLTGVEFMQSSCMTYCYAEPTVEITLPGKDPVVFGGVDENRARELVTEYVMKGEPVEGIIPVNYERVVL.

Heterotetramer composed of HndA, HndB, HndC and HndD subunits. HndA and HndB could form a heterodimeric intermediate in the electron transfer between the active site of hydrogenase subunit HndD and the NADP reduction site of the reducing subunit HndC.

It catalyses the reaction H2 + NADP(+) = NADPH + H(+). With respect to regulation, inhibited by oxygen. In terms of biological role, catalyzes the reduction of NADP in the presence of molecular H2 to yield NADPH. The polypeptide is NADP-reducing hydrogenase subunit HndB (hndB) (Solidesulfovibrio fructosivorans (Desulfovibrio fructosivorans)).